A 149-amino-acid chain; its full sequence is Ribonuclease VapC2 (149 aa).

A PINc domain is found at 11–149 (IFFDSNILIY…RVDFLEIIEI (139 aa)). Mg(2+) contacts are provided by aspartate 14 and aspartate 116.

The protein belongs to the PINc/VapC protein family. The cofactor is Mg(2+).

Toxic component of a type II toxin-antitoxin (TA) system. An RNase. Its cognate antitoxin is VapB2. This is Ribonuclease VapC2 from Methanocaldococcus jannaschii (strain ATCC 43067 / DSM 2661 / JAL-1 / JCM 10045 / NBRC 100440) (Methanococcus jannaschii).